The primary structure comprises 476 residues: tRNA(Ile)-lysidine synthase (476 aa).

25–30 is an ATP binding site; that stretch reads SGGPDS.

This sequence belongs to the tRNA(Ile)-lysidine synthase family.

The protein localises to the cytoplasm. It catalyses the reaction cytidine(34) in tRNA(Ile2) + L-lysine + ATP = lysidine(34) in tRNA(Ile2) + AMP + diphosphate + H(+). Its function is as follows. Ligates lysine onto the cytidine present at position 34 of the AUA codon-specific tRNA(Ile) that contains the anticodon CAU, in an ATP-dependent manner. Cytidine is converted to lysidine, thus changing the amino acid specificity of the tRNA from methionine to isoleucine. The chain is tRNA(Ile)-lysidine synthase from Bacillus licheniformis (strain ATCC 14580 / DSM 13 / JCM 2505 / CCUG 7422 / NBRC 12200 / NCIMB 9375 / NCTC 10341 / NRRL NRS-1264 / Gibson 46).